We begin with the raw amino-acid sequence, 289 residues long: 4-diphosphocytidyl-2-C-methyl-D-erythritol kinase (289 aa).

Lys10 is a catalytic residue. Pro94–Ser104 serves as a coordination point for ATP. The active site involves Asp136.

The protein belongs to the GHMP kinase family. IspE subfamily.

It carries out the reaction 4-CDP-2-C-methyl-D-erythritol + ATP = 4-CDP-2-C-methyl-D-erythritol 2-phosphate + ADP + H(+). Its pathway is isoprenoid biosynthesis; isopentenyl diphosphate biosynthesis via DXP pathway; isopentenyl diphosphate from 1-deoxy-D-xylulose 5-phosphate: step 3/6. Its function is as follows. Catalyzes the phosphorylation of the position 2 hydroxy group of 4-diphosphocytidyl-2C-methyl-D-erythritol. The polypeptide is 4-diphosphocytidyl-2-C-methyl-D-erythritol kinase (Bacillus anthracis).